Here is a 199-residue protein sequence, read N- to C-terminus: Charged multivesicular body protein 1B1 (199 aa).

Positions 10 to 48 (NLKFAAKELNRSSKKCDKEEKAEKAKIKKAIQKGNMEVA) form a coiled coil. An interaction with IST1 region spans residues 132 to 156 (MEDTMSSTTTLTTPQNQVDMLLQEM). The tract at residues 167 to 199 (ELPQGQTGSVGTSVASAEQDELSQRLARLRDQV) is disordered. Over residues 170 to 182 (QGQTGSVGTSVAS) the composition is skewed to polar residues. Residues 174–199 (GSVGTSVASAEQDELSQRLARLRDQV) form an interaction with SPAST region. A coiled-coil region spans residues 178–199 (TSVASAEQDELSQRLARLRDQV). Positions 180-196 (VASAEQDELSQRLARLR) are interaction with VPS4A, MITD1 and STAMBP. The interval 180–199 (VASAEQDELSQRLARLRDQV) is interaction with VTA1. Residues 183-199 (AEQDELSQRLARLRDQV) are interaction with VPS4B. Positions 186–196 (DELSQRLARLR) match the MIT-interacting motif motif.

This sequence belongs to the SNF7 family. Probable peripherally associated component of the endosomal sorting required for transport complex III (ESCRT-III). ESCRT-III components are thought to multimerize to form a flat lattice on the perimeter membrane of the endosome. Several assembly forms of ESCRT-III may exist that interact and act sequentially. Interacts with CHMP1A. Interacts with VTA1; the interaction probably involves the open conformation of CHMP1B. Interacts with CHMP2A. Interacts with VPS4A; the interaction is direct. Interacts with VPS4B; the interaction is direct. Interacts with SPAST (via MIT domain); the interaction is direct. Interacts with IST1. Interacts with MITD1. Interacts with STAMBP.

It is found in the cytoplasm. It localises to the cytosol. The protein resides in the endosome. The protein localises to the late endosome membrane. Probable peripherally associated component of the endosomal sorting required for transport complex III (ESCRT-III) which is involved in multivesicular bodies (MVBs) formation and sorting of endosomal cargo proteins into MVBs. MVBs contain intraluminal vesicles (ILVs) that are generated by invagination and scission from the limiting membrane of the endosome and mostly are delivered to lysosomes enabling degradation of membrane proteins, such as stimulated growth factor receptors, lysosomal enzymes and lipids. The MVB pathway appears to require the sequential function of ESCRT-O, -I,-II and -III complexes. ESCRT-III proteins mostly dissociate from the invaginating membrane before the ILV is released. The ESCRT machinery also functions in topologically equivalent membrane fission events, such as the terminal stages of cytokinesis. ESCRT-III proteins are believed to mediate the necessary vesicle extrusion and/or membrane fission activities, possibly in conjunction with the AAA ATPase VPS4. Involved in cytokinesis. Involved in recruiting VPS4A and/or VPS4B and SPAST to the midbody of dividing cells. The chain is Charged multivesicular body protein 1B1 from Mus musculus (Mouse).